The following is a 264-amino-acid chain: Thymidylate synthase (264 aa).

DUMP is bound at residue Arg-21. His-51 provides a ligand contact to (6R)-5,10-methylene-5,6,7,8-tetrahydrofolate. 126-127 (RR) provides a ligand contact to dUMP. Cys-146 functions as the Nucleophile in the catalytic mechanism. Residues 166 to 169 (RSAD), Asn-177, and 207 to 209 (HLY) contribute to the dUMP site. Asp-169 is a (6R)-5,10-methylene-5,6,7,8-tetrahydrofolate binding site. Ala-263 contacts (6R)-5,10-methylene-5,6,7,8-tetrahydrofolate.

It belongs to the thymidylate synthase family. Bacterial-type ThyA subfamily. As to quaternary structure, homodimer.

The protein resides in the cytoplasm. The enzyme catalyses dUMP + (6R)-5,10-methylene-5,6,7,8-tetrahydrofolate = 7,8-dihydrofolate + dTMP. It participates in pyrimidine metabolism; dTTP biosynthesis. Its function is as follows. Catalyzes the reductive methylation of 2'-deoxyuridine-5'-monophosphate (dUMP) to 2'-deoxythymidine-5'-monophosphate (dTMP) while utilizing 5,10-methylenetetrahydrofolate (mTHF) as the methyl donor and reductant in the reaction, yielding dihydrofolate (DHF) as a by-product. This enzymatic reaction provides an intracellular de novo source of dTMP, an essential precursor for DNA biosynthesis. In Dechloromonas aromatica (strain RCB), this protein is Thymidylate synthase.